A 332-amino-acid chain; its full sequence is uncharacterized protein (332 aa).

The first 32 residues, 1–32, serve as a signal peptide directing secretion; it reads MSRDRGARGLRKYGRFALATGAATALSLTASG. A lipid anchor (N-palmitoyl cysteine) is attached at Cys-33. Cys-33 carries the S-diacylglycerol cysteine lipid modification.

Its subcellular location is the cell membrane. This is an uncharacterized protein from Streptomyces avermitilis (strain ATCC 31267 / DSM 46492 / JCM 5070 / NBRC 14893 / NCIMB 12804 / NRRL 8165 / MA-4680).